Here is a 581-residue protein sequence, read N- to C-terminus: Arginine--tRNA ligase (581 aa).

Residues 131-141 (ANPTGPLHVGH) carry the 'HIGH' region motif.

Belongs to the class-I aminoacyl-tRNA synthetase family. Monomer.

The protein localises to the cytoplasm. It carries out the reaction tRNA(Arg) + L-arginine + ATP = L-arginyl-tRNA(Arg) + AMP + diphosphate. The chain is Arginine--tRNA ligase from Ruegeria pomeroyi (strain ATCC 700808 / DSM 15171 / DSS-3) (Silicibacter pomeroyi).